The following is a 317-amino-acid chain: Annexin A13 (317 aa).

Residue Gly2 is the site of N-myristoyl glycine attachment. 4 Annexin repeats span residues 15 to 86, 87 to 158, 170 to 242, and 246 to 317; these read FDAD…ALLD, RPNE…SLLQ, ELAG…TIVR, and DLEG…ALLH.

The protein belongs to the annexin family. Monomer and homodimer. Detected on the tips of microvilli in small intestine (at protein level).

It localises to the apical cell membrane. The protein localises to the cell membrane. It is found in the cytoplasmic vesicle. Binds to membranes enriched in phosphatidylserine or phosphatidylglycerol in a calcium-dependent manner. Half-maximal membrane binding requires about 60 uM calcium. Does not bind to membranes that lack phospholipids with an acidic headgroup. In Mus musculus (Mouse), this protein is Annexin A13 (Anxa13).